The primary structure comprises 92 residues: Small ribosomal subunit protein uS19 (92 aa).

Belongs to the universal ribosomal protein uS19 family.

Its function is as follows. Protein S19 forms a complex with S13 that binds strongly to the 16S ribosomal RNA. This is Small ribosomal subunit protein uS19 from Methylorubrum extorquens (strain CM4 / NCIMB 13688) (Methylobacterium extorquens).